Reading from the N-terminus, the 292-residue chain is 33 kDa chaperonin (292 aa).

2 disulfide bridges follow: Cys236-Cys238 and Cys269-Cys272.

It belongs to the HSP33 family. Under oxidizing conditions two disulfide bonds are formed involving the reactive cysteines. Under reducing conditions zinc is bound to the reactive cysteines and the protein is inactive.

It is found in the cytoplasm. Redox regulated molecular chaperone. Protects both thermally unfolding and oxidatively damaged proteins from irreversible aggregation. Plays an important role in the bacterial defense system toward oxidative stress. In Ruminiclostridium cellulolyticum (strain ATCC 35319 / DSM 5812 / JCM 6584 / H10) (Clostridium cellulolyticum), this protein is 33 kDa chaperonin.